The following is a 1100-amino-acid chain: Collagen alpha-2(I) chain (1100 aa).

A disordered region spans residues 1 to 982; the sequence is QYDGVKAPDP…PGPAGGGYDV (982 aa). Low complexity-rich tracts occupy residues 122 to 170, 200 to 209, and 216 to 237; these read EPGA…AAGP, EPGPNGAVGP, and PGNNGLNGAKGAAGTPGVAGAP. The span at 239-249 shows a compositional bias: pro residues; the sequence is FPGPRGGPGPQ. Residues 251-261 are compositionally biased toward low complexity; the sequence is PQGAAGQRGLA. Residues 268-277 show a composition bias toward gly residues; it reads GVKGDGGPKG. Low complexity-rich tracts occupy residues 333-352, 358-385, 435-448, and 460-472; these read MPGARGASGAAGPRGPPGDA, SGPAGLRGLPGSPGSSGPPGKEGAAGPA, APGPDGNNGATGAT, and QGASGAPGFQGLP. Residues 473–482 show a composition bias toward gly residues; it reads GPAGGAGEAG. Residues 507–517 are compositionally biased toward low complexity; it reads NPGAAGASGPQ. A compositionally biased stretch (gly residues) spans 530–557; it reads GTDGGKGEPGAAGAAGGPGHQGPGGMPG. Residues 568–579 are compositionally biased toward basic and acidic residues; that stretch reads KGEKGEGGHRGP. Residues 633-646 show a composition bias toward low complexity; the sequence is PAGAPGFAGPPGAD. Residues 656-665 show a composition bias toward gly residues; the sequence is GPSGGKGESG. Composition is skewed to low complexity over residues 666 to 691, 702 to 729, and 757 to 775; these read PSGPAGPAGQSGPPGASGPAGPTGAR, FPGAAGRVGAAGPAGLVGPPGAAGPAGK, and SGEKGXPGTPGTSGPLGLQ. A compositionally biased stretch (gly residues) spans 788 to 797; sequence GSPGGAGAVG. 2 stretches are compositionally biased toward low complexity: residues 798–820 and 854–866; these read EAGRVGPAGPAGARGAPGNLGLP and AGPTGAAGRPGNR. Over residues 867–876 the composition is skewed to gly residues; it reads GESGPGGAAG. The span at 877-892 shows a compositional bias: low complexity; it reads AVGPAGARGAAGPSGP. Over residues 893–907 the composition is skewed to basic and acidic residues; the sequence is RGEKGVAGEKGERGM. Positions 916–935 are enriched in low complexity; that stretch reads LQGMPGPSGPSGDTGSAGPN. A Fibrillar collagen NC1 domain is found at 1071 to 1100; that stretch reads TRLPLLDLAPLDLGGADQEFGLDLGPVCFK.

The protein belongs to the fibrillar collagen family.

The protein localises to the secreted. It is found in the extracellular space. Its subcellular location is the extracellular matrix. The sequence is that of Collagen alpha-2(I) chain from Epinephelus caninus (Dogtooth grouper).